The sequence spans 1597 residues: Glucosyltransferase-I (1597 aa).

The signal sequence occupies residues 1–38 (MEKNERFKMHKVKKRWVTISVASATMLASALGASVASA). The disordered stretch occupies residues 52 to 120 (LTADQTTTNQ…QTTTNANEAK (69 aa)). The span at 53–114 (TADQTTTNQD…STDTAAQTTT (62 aa)) shows a compositional bias: low complexity. Cell wall-binding repeat units lie at residues 157-176 (MSNV…DGNV) and 178-197 (KNFA…TGAY). A catalytic; approximate region spans residues 200–1050 (TSKVEADKSG…DQASNKYLNV (851 aa)). Cell wall-binding repeat units lie at residues 1089-1108 (TDSF…DGYM), 1109-1128 (VTGA…NGAA), 1130-1150 (RNTV…DGKR), 1152-1172 (ENGY…GVMA), 1173-1191 (LGLT…DGVQ), 1193-1214 (KDKI…NGNA), 1216-1236 (TNTF…DGVA), 1237-1256 (VTGA…NGQQ), 1258-1279 (KGDF…SGDM), 1281-1301 (TNTF…DGAA), 1302-1321 (VTGA…NGQQ), 1323-1343 (KGDI…QTGE), 1344-1365 (QVFN…DGTA), 1366-1380 (QTQA…KDGS), 1415-1434 (LTGA…NGHQ), 1436-1457 (KGQL…SGDQ), 1459-1478 (FNKS…DGTA), 1485-1505 (KGQT…EGQY), 1508-1527 (GSGW…DGKV), 1528-1547 (LTGL…NGIQ), 1549-1570 (KGKA…SGSM), and 1572-1591 (TNQW…DGAA). Residues 1099–1597 (LYYFGQDGYM…DGAAVYRGWN (499 aa)) are glucan-binding; approximate.

Belongs to the glycosyl hydrolase 70 family.

Its subcellular location is the secreted. It catalyses the reaction [(1-&gt;6)-alpha-D-glucosyl](n) + sucrose = [(1-&gt;6)-alpha-D-glucosyl](n+1) + D-fructose. Production of extracellular glucans, that are thought to play a key role in the development of the dental plaque because of their ability to adhere to smooth surfaces and mediate the aggregation of bacterial cells and food debris. This Streptococcus downei (Streptococcus sobrinus) protein is Glucosyltransferase-I (gtfI).